The chain runs to 337 residues: Ketol-acid reductoisomerase (NADP(+)) (337 aa).

Residues 3-183 form the KARI N-terminal Rossmann domain; sequence VEMFYDDDAD…GGARAGVIKT (181 aa). NADP(+) is bound by residues 26-29, Lys-49, Ser-52, Ser-54, and 84-87; these read YGSQ and DTAQ. His-109 is an active-site residue. Gly-135 serves as a coordination point for NADP(+). The KARI C-terminal knotted domain occupies 184–329; that stretch reads TFKEETETDL…KKLRDLMSWV (146 aa). Residues Asp-192, Glu-196, Glu-228, and Glu-232 each contribute to the Mg(2+) site. Ser-253 contributes to the substrate binding site.

The protein belongs to the ketol-acid reductoisomerase family. The cofactor is Mg(2+).

The catalysed reaction is (2R)-2,3-dihydroxy-3-methylbutanoate + NADP(+) = (2S)-2-acetolactate + NADPH + H(+). The enzyme catalyses (2R,3R)-2,3-dihydroxy-3-methylpentanoate + NADP(+) = (S)-2-ethyl-2-hydroxy-3-oxobutanoate + NADPH + H(+). Its pathway is amino-acid biosynthesis; L-isoleucine biosynthesis; L-isoleucine from 2-oxobutanoate: step 2/4. It participates in amino-acid biosynthesis; L-valine biosynthesis; L-valine from pyruvate: step 2/4. In terms of biological role, involved in the biosynthesis of branched-chain amino acids (BCAA). Catalyzes an alkyl-migration followed by a ketol-acid reduction of (S)-2-acetolactate (S2AL) to yield (R)-2,3-dihydroxy-isovalerate. In the isomerase reaction, S2AL is rearranged via a Mg-dependent methyl migration to produce 3-hydroxy-3-methyl-2-ketobutyrate (HMKB). In the reductase reaction, this 2-ketoacid undergoes a metal-dependent reduction by NADPH to yield (R)-2,3-dihydroxy-isovalerate. In Mycolicibacterium smegmatis (strain ATCC 700084 / mc(2)155) (Mycobacterium smegmatis), this protein is Ketol-acid reductoisomerase (NADP(+)).